Here is a 274-residue protein sequence, read N- to C-terminus: Acyl-[acyl-carrier-protein]--UDP-N-acetylglucosamine O-acyltransferase (274 aa).

Belongs to the transferase hexapeptide repeat family. LpxA subfamily. In terms of assembly, homotrimer.

The protein localises to the cytoplasm. The enzyme catalyses a (3R)-hydroxyacyl-[ACP] + UDP-N-acetyl-alpha-D-glucosamine = a UDP-3-O-[(3R)-3-hydroxyacyl]-N-acetyl-alpha-D-glucosamine + holo-[ACP]. The protein operates within glycolipid biosynthesis; lipid IV(A) biosynthesis; lipid IV(A) from (3R)-3-hydroxytetradecanoyl-[acyl-carrier-protein] and UDP-N-acetyl-alpha-D-glucosamine: step 1/6. In terms of biological role, involved in the biosynthesis of lipid A, a phosphorylated glycolipid that anchors the lipopolysaccharide to the outer membrane of the cell. The chain is Acyl-[acyl-carrier-protein]--UDP-N-acetylglucosamine O-acyltransferase from Bartonella bacilliformis (strain ATCC 35685 / KC583 / Herrer 020/F12,63).